Reading from the N-terminus, the 163-residue chain is Phosphopantetheine adenylyltransferase (163 aa).

T11 contributes to the substrate binding site. ATP contacts are provided by residues 11–12 and H19; that span reads TF. Positions 43, 75, and 89 each coordinate substrate. Residues 90–92, E100, and 125–131 each bind ATP; these read GLR and YMFISAT.

It belongs to the bacterial CoaD family. As to quaternary structure, homohexamer. Mg(2+) is required as a cofactor.

The protein resides in the cytoplasm. The catalysed reaction is (R)-4'-phosphopantetheine + ATP + H(+) = 3'-dephospho-CoA + diphosphate. Its pathway is cofactor biosynthesis; coenzyme A biosynthesis; CoA from (R)-pantothenate: step 4/5. In terms of biological role, reversibly transfers an adenylyl group from ATP to 4'-phosphopantetheine, yielding dephospho-CoA (dPCoA) and pyrophosphate. The polypeptide is Phosphopantetheine adenylyltransferase (Aromatoleum aromaticum (strain DSM 19018 / LMG 30748 / EbN1) (Azoarcus sp. (strain EbN1))).